Here is a 544-residue protein sequence, read N- to C-terminus: MATPLQPFLTKTHKQNPIIGFNILTFVVTLFVALFLVVFLVAPYQFEIKHSNLCKTAQDSQLCLSYVSEIVTTESDGVTVLKKFLVKYVHQMNNAIPVVRKIKNQINDIRQQGALTDCLELLDQSVDLVSDSIAAIDKRSRSEHANAQSWLSGVLTNHVTCLDELTSFSLSTKNGTVLDELITRAKVALAMLASVTTPNDEVLRQGLGKMPYWVSSRDRKLMESSGKDIIANRVVAQDGTGDYQTLAEAVAAAPDKNKTRYVIYVKMGIYKENVVVTKKKMNLMIVGDGMNATIITGSLNVVDGSTFPSNTLAAVGQGFILQDICIQNTAGPEKDQAVALRVGADMSVINRCRIDAYQDTLYAHSQRQFYRDSYVTGTVDFIFGNAAVVFQKCQIVARKPNKRQKNMVTAQGRTDPNQATGTSIQFCDIIASPDLEPVMNEYKTYLGRPWKKHSRTVVMQSYLDGHIDPSGWFEWRGDFALKTLYYGEFMNNGPGAGTSKRVKWPGYHVITDPNEAMPFTVAELIQGGSWLNSTSVAYVEGLVE.

3 N-linked (GlcNAc...) asparagine glycosylation sites follow: Asn174, Asn257, and Asn291. Substrate is bound by residues Thr306 and Gln336. The Proton donor role is filled by Asp359. Asp380 acts as the Nucleophile in catalysis. Substrate contacts are provided by Arg448 and Trp450. The N-linked (GlcNAc...) asparagine glycan is linked to Asn532.

This sequence in the N-terminal section; belongs to the PMEI family. In the C-terminal section; belongs to the pectinesterase family.

It localises to the secreted. The protein localises to the cell wall. It catalyses the reaction [(1-&gt;4)-alpha-D-galacturonosyl methyl ester](n) + n H2O = [(1-&gt;4)-alpha-D-galacturonosyl](n) + n methanol + n H(+). Its pathway is glycan metabolism; pectin degradation; 2-dehydro-3-deoxy-D-gluconate from pectin: step 1/5. Acts in the modification of cell walls via demethylesterification of cell wall pectin. This Solanum lycopersicum (Tomato) protein is Pectinesterase 3 (PME3).